A 455-amino-acid polypeptide reads, in one-letter code: Adenylyltransferase and sulfurtransferase UBA4 (455 aa).

Residues Gly93, Asp114, 121–125, Lys138, and 182–183 each bind ATP; these read SNLHR and DH. Residues Cys224 and Cys227 each coordinate Zn(2+). Cys241 serves as the catalytic Glycyl thioester intermediate; for adenylyltransferase activity. Residues Cys302 and Cys305 each contribute to the Zn(2+) site. A Rhodanese domain is found at 355–453; that stretch reads QSREHTLIDV…WSEDIDAAFP (99 aa). The Cysteine persulfide intermediate; for sulfurtransferase activity role is filled by Cys413.

In the N-terminal section; belongs to the HesA/MoeB/ThiF family. UBA4 subfamily. It depends on Zn(2+) as a cofactor.

It localises to the cytoplasm. Its subcellular location is the cytosol. The protein operates within tRNA modification; 5-methoxycarbonylmethyl-2-thiouridine-tRNA biosynthesis. In terms of biological role, plays a central role in 2-thiolation of mcm(5)S(2)U at tRNA wobble positions of cytosolic tRNA(Lys), tRNA(Glu) and tRNA(Gln). Acts by mediating the C-terminal thiocarboxylation of sulfur carrier URM1. Its N-terminus first activates URM1 as acyl-adenylate (-COAMP), then the persulfide sulfur on the catalytic cysteine is transferred to URM1 to form thiocarboxylation (-COSH) of its C-terminus. The reaction probably involves hydrogen sulfide that is generated from the persulfide intermediate and that acts as a nucleophile towards URM1. Subsequently, a transient disulfide bond is formed. Does not use thiosulfate as sulfur donor; NFS1 probably acting as a sulfur donor for thiocarboxylation reactions. Prior mcm(5) tRNA modification by the elongator complex is required for 2-thiolation. May also be involved in protein urmylation. The protein is Adenylyltransferase and sulfurtransferase UBA4 of Lodderomyces elongisporus (strain ATCC 11503 / CBS 2605 / JCM 1781 / NBRC 1676 / NRRL YB-4239) (Yeast).